The primary structure comprises 513 residues: 2,3-bisphosphoglycerate-independent phosphoglycerate mutase (513 aa).

Mn(2+)-binding residues include aspartate 13 and serine 63. The active-site Phosphoserine intermediate is serine 63. Substrate-binding positions include histidine 124, 154-155 (RD), arginine 186, arginine 192, 262-265 (RADR), and lysine 335. Mn(2+) is bound by residues aspartate 402, histidine 406, aspartate 443, histidine 444, and histidine 462.

It belongs to the BPG-independent phosphoglycerate mutase family. Monomer. Mn(2+) is required as a cofactor.

It catalyses the reaction (2R)-2-phosphoglycerate = (2R)-3-phosphoglycerate. It participates in carbohydrate degradation; glycolysis; pyruvate from D-glyceraldehyde 3-phosphate: step 3/5. In terms of biological role, catalyzes the interconversion of 2-phosphoglycerate and 3-phosphoglycerate. In Photobacterium profundum (strain SS9), this protein is 2,3-bisphosphoglycerate-independent phosphoglycerate mutase.